The primary structure comprises 112 residues: uncharacterized protein (112 aa).

Transmembrane regions (helical) follow at residues 33–53, 58–78, and 91–111; these read PSPL…PFGA, LYIY…NVCT, and CVYV…LLFV.

The protein resides in the membrane. This is an uncharacterized protein from Saccharomyces cerevisiae (strain ATCC 204508 / S288c) (Baker's yeast).